The following is a 341-amino-acid chain: UDP-3-O-acylglucosamine N-acyltransferase (341 aa).

Histidine 240 (proton acceptor) is an active-site residue.

The protein belongs to the transferase hexapeptide repeat family. LpxD subfamily. In terms of assembly, homotrimer.

The enzyme catalyses a UDP-3-O-[(3R)-3-hydroxyacyl]-alpha-D-glucosamine + a (3R)-hydroxyacyl-[ACP] = a UDP-2-N,3-O-bis[(3R)-3-hydroxyacyl]-alpha-D-glucosamine + holo-[ACP] + H(+). The protein operates within bacterial outer membrane biogenesis; LPS lipid A biosynthesis. Its function is as follows. Catalyzes the N-acylation of UDP-3-O-acylglucosamine using 3-hydroxyacyl-ACP as the acyl donor. Is involved in the biosynthesis of lipid A, a phosphorylated glycolipid that anchors the lipopolysaccharide to the outer membrane of the cell. The sequence is that of UDP-3-O-acylglucosamine N-acyltransferase from Cellvibrio japonicus (strain Ueda107) (Pseudomonas fluorescens subsp. cellulosa).